Consider the following 405-residue polypeptide: L-carnitine CoA-transferase (405 aa).

Residues Lys97 and Arg104 each coordinate CoA. Asp169 serves as the catalytic Nucleophile.

Belongs to the CoA-transferase III family. CaiB subfamily. Homodimer.

It localises to the cytoplasm. It catalyses the reaction crotonobetainyl-CoA + (R)-carnitine = crotonobetaine + (R)-carnitinyl-CoA. The enzyme catalyses 4-(trimethylamino)butanoyl-CoA + (R)-carnitine = (R)-carnitinyl-CoA + 4-(trimethylamino)butanoate. The protein operates within amine and polyamine metabolism; carnitine metabolism. Its function is as follows. Catalyzes the reversible transfer of the CoA moiety from gamma-butyrobetainyl-CoA to L-carnitine to generate L-carnitinyl-CoA and gamma-butyrobetaine. Is also able to catalyze the reversible transfer of the CoA moiety from gamma-butyrobetainyl-CoA or L-carnitinyl-CoA to crotonobetaine to generate crotonobetainyl-CoA. The polypeptide is L-carnitine CoA-transferase (Escherichia coli O139:H28 (strain E24377A / ETEC)).